Consider the following 508-residue polypeptide: Cyclin-A1-1 (508 aa).

Residues 1–28 show a composition bias toward low complexity; the sequence is MSSNLAASRRSSSSSSVAAAAAAKRPAV. Disordered stretches follow at residues 1–40 and 82–125; these read MSSN…GKAA and VKKG…ESVL. Residues 29 to 39 are compositionally biased toward gly residues; that stretch reads GEGGGGGGGKA. Residues 98-111 show a composition bias toward low complexity; the sequence is ASAVKSASAKPAPA.

Belongs to the cyclin family. Cyclin AB subfamily. Expressed in the dividing region of the root cap and root apex. Expressed in the intercalary meristem of internodes and in adventitious roots under submergence conditions.

Functionally, involved in the control of the cell cycle at the G2/M (mitosis) transition. The sequence is that of Cyclin-A1-1 (CYCA1-1) from Oryza sativa subsp. japonica (Rice).